A 68-amino-acid chain; its full sequence is Conotoxin Mr3.4 (68 aa).

Positions 1-19 (MSKLGVLLTICLLLFPLTA) are cleaved as a signal peptide. The propeptide occupies 20–49 (VPLDGDQPADRPAERMQDDISSERHPFFDR). Disulfide bonds link Cys-53–Cys-67, Cys-54–Cys-63, and Cys-59–Cys-66. Pro-65 carries the 4-hydroxyproline modification.

This sequence belongs to the conotoxin M superfamily. Expressed by the venom duct.

It localises to the secreted. The protein is Conotoxin Mr3.4 of Conus marmoreus (Marble cone).